The sequence spans 296 residues: GTPase Era (296 aa).

The 168-residue stretch at Lys-3–Glu-170 folds into the Era-type G domain. The segment at Gly-11–Ser-18 is G1. Gly-11–Ser-18 is a binding site for GTP. The interval Gln-37 to Asn-41 is G2. The tract at residues Asp-58–Gly-61 is G3. GTP is bound by residues Asp-58–Ile-62 and Asn-120–Asp-123. Residues Asn-120–Asp-123 form a G4 region. Residues Ile-149–Ala-151 form a G5 region. Residues Leu-201 to Glu-278 form the KH type-2 domain.

The protein belongs to the TRAFAC class TrmE-Era-EngA-EngB-Septin-like GTPase superfamily. Era GTPase family. Monomer.

The protein localises to the cytoplasm. It localises to the cell membrane. Its function is as follows. An essential GTPase that binds both GDP and GTP, with rapid nucleotide exchange. Plays a role in 16S rRNA processing and 30S ribosomal subunit biogenesis and possibly also in cell cycle regulation and energy metabolism. The chain is GTPase Era from Clostridium botulinum (strain Okra / Type B1).